Reading from the N-terminus, the 308-residue chain is Microtubule integrity protein mal3 (308 aa).

One can recognise a Calponin-homology (CH) domain in the interval 2-103 (SESRQELLAW…FVQWAKRFWD (102 aa)). The disordered stretch occupies residues 117–162 (RGNRGPANTRVMNSSAGATGPSRRRQVSSGSSTPSMTKSSANNNNV). The span at 144-162 (SSGSSTPSMTKSSANNNNV) shows a compositional bias: low complexity. Positions 173-247 (RAKQAQQQIT…LYSTEDGFEL (75 aa)) constitute an EB1 C-terminal domain.

It belongs to the MAPRE family. As to quaternary structure, interacts with tea2.

The protein localises to the cytoplasm. It localises to the cytoskeleton. Its function is as follows. May play a role in regulating the integrity of microtubules possibly by influencing their stability. Involved in an anchoring mechanism to maintain tea2 and tip1 at growing microtubule ends. Strongly stimulates the ATPase activity of tea2. This Schizosaccharomyces pombe (strain 972 / ATCC 24843) (Fission yeast) protein is Microtubule integrity protein mal3 (mal3).